Here is a 169-residue protein sequence, read N- to C-terminus: Cilia- and flagella-associated protein 276 (169 aa).

Disordered stretches follow at residues 26–45 (SKKL…EPWS) and 150–169 (HTAA…FFST). The span at 36–45 (HLAQQQEPWS) shows a compositional bias: polar residues. The span at 160–169 (RKKDGGFFST) shows a compositional bias: basic and acidic residues.

In terms of assembly, microtubule inner protein component of sperm flagellar doublet microtubules. As to expression, expressed in cerebrum, cerebellum, gastrocnemius muscle, spinal cord and lung tissues.

The protein resides in the cytoplasm. The protein localises to the cytoskeleton. Its subcellular location is the flagellum axoneme. It is found in the cilium axoneme. In terms of biological role, microtubule inner protein (MIP) part of the dynein-decorated doublet microtubules (DMTs) in cilia axoneme, which is required for motile cilia beating. May play an important role for the maintenance of myelin-axon integrity. May affect intracellular Ca(2+) homeostasis. In Homo sapiens (Human), this protein is Cilia- and flagella-associated protein 276.